The chain runs to 90 residues: Long neurotoxin OH-34 (90 aa).

The signal sequence occupies residues 1-20; that stretch reads KTLLLTLVVVTILCLDLGYT. Intrachain disulfides connect cysteine 23–cysteine 41, cysteine 34–cysteine 62, cysteine 47–cysteine 51, cysteine 66–cysteine 77, and cysteine 78–cysteine 83.

It belongs to the three-finger toxin family. Long-chain subfamily. Type II alpha-neurotoxin sub-subfamily. In terms of tissue distribution, expressed by the venom gland.

The protein localises to the secreted. Its function is as follows. Binds with high affinity to muscular (alpha-1/CHRNA1) and neuronal (alpha-7/CHRNA7) nicotinic acetylcholine receptor (nAChR) and inhibits acetylcholine from binding to the receptor, thereby impairing neuromuscular and neuronal transmission. In Ophiophagus hannah (King cobra), this protein is Long neurotoxin OH-34.